Reading from the N-terminus, the 716-residue chain is Protein C-mannosyl-transferase DPY19L3 (716 aa).

Residues 1–43 (MMYIRQRKETKPIEVSEDFPSPKEDVKLEKKLPSGCASGRFWK) are Cytoplasmic-facing. Residues 44–64 (ILSSAVGGTVALCIGLLTSVY) traverse the membrane as a helical segment. The Lumenal segment spans residues 65–154 (LATLHENDLW…RVLPIQKYLE (90 aa)). Asn118 carries an N-linked (GlcNAc...) asparagine glycan. The chain crosses the membrane as a helical span at residues 155–182 (PVYFYIYTLFGLQAVYVTALYITSWLLS). At 183–184 (GT) the chain is on the cytoplasmic side. The segment at residues 185–197 (WLSGLLAALWYVT) is an intramembrane region (name=3). Residues 198-215 (NRIDTTRVEFTIPLRENW) are Cytoplasmic-facing. Residues 216 to 230 (ALPFFAIQIAAITYF) constitute an intramembrane region (name=4). Over 231-239 (LRPNLQPLS) the chain is Cytoplasmic. Residues 240-256 (ERLTLLAIFVSTFLFSL) form a helical membrane-spanning segment. Residues 257–262 (TWQFNQ) lie on the Lumenal side of the membrane. A helical membrane pass occupies residues 263-279 (FMMLLQALVLFILDSLD). At 280 to 289 (MLPAMKATWL) the chain is on the cytoplasmic side. The chain crosses the membrane as a helical span at residues 290–306 (YGIQISCLLLVCTLQFF). At 307–308 (NS) the chain is on the lumenal side. A helical transmembrane segment spans residues 309-323 (MILGSLLISFNLSVL). The Cytoplasmic portion of the chain corresponds to 324 to 338 (IVRKLQKNLKTGSFL). Residues 339–359 (TRIWKLLLHLLLVFCLTLFLN) traverse the membrane as a helical segment. At 360–414 (NIIKKVLNLKSDEHIFKFLKAKFGFGATRDFDANLYLCEEAFGLLPLNTFQRLSE) the chain is on the lumenal side. The chain crosses the membrane as a helical span at residues 415 to 437 (TLLFYAYMFVLVVTVVTASVVAF). At 438-465 (HNLSDSTSLKSMDQTRKRAVDLKPEAAY) the chain is on the cytoplasmic side. The chain crosses the membrane as a helical span at residues 466 to 485 (NLIHTILFGVLALSTMRMKY). The Lumenal portion of the chain corresponds to 486-487 (LW). Residues 488-499 (TSHMCVFASFGL) form a helical membrane-spanning segment. Topologically, residues 500–522 (CSSEVWELLLRLVHLCNPKRIWV) are cytoplasmic. A helical transmembrane segment spans residues 523-539 (LRYLVPVLTLLYLCYKS). Residues 540–716 (WPGVMDELSE…FHVYKLSRNK (177 aa)) are Lumenal-facing. Asn704 carries N-linked (GlcNAc...) asparagine glycosylation.

The protein belongs to the dpy-19 family.

It is found in the endoplasmic reticulum membrane. The catalysed reaction is L-tryptophyl-[protein] + a di-trans,poly-cis-dolichyl beta-D-mannosyl phosphate = C-alpha-D-mannosyl-L-tryptophyl-[protein] + a di-trans,poly-cis-dolichyl phosphate + H(+). It participates in protein modification; protein glycosylation. C-mannosyltransferase that mediates C-mannosylation of tryptophan residues on target proteins. The reaction occurs on the luminal side of the endoplasmic reticulum and involves the transfer of a mannose unit from a dolichylphosphate mannose (Dol-P-Man) donor to an acceptor protein containing a WxxW or WxxC consensus sequence. C-mannosylates RSPO1, a Wnt signaling regulator, preferentially at the first Trp residue in the sequence WxxW. C-mannosylates the netrin receptor UNC5A, preferentially at the third tryptophan of WxxWxxWxxC sequence. This Mus musculus (Mouse) protein is Protein C-mannosyl-transferase DPY19L3 (Dpy19l3).